Reading from the N-terminus, the 311-residue chain is Malate dehydrogenase (311 aa).

NAD(+) contacts are provided by residues 7–13 (GAAGGIG) and D34. Substrate is bound by residues R81 and R87. NAD(+) is bound by residues N94 and 117–119 (ITN). The substrate site is built by N119 and R153. The Proton acceptor role is filled by H177. An NAD(+)-binding site is contributed by M227.

It belongs to the LDH/MDH superfamily. MDH type 1 family. As to quaternary structure, homodimer.

The catalysed reaction is (S)-malate + NAD(+) = oxaloacetate + NADH + H(+). In terms of biological role, catalyzes the reversible oxidation of malate to oxaloacetate. This Shewanella amazonensis (strain ATCC BAA-1098 / SB2B) protein is Malate dehydrogenase.